The sequence spans 257 residues: Large ribosomal subunit protein bL28m (257 aa).

The transit peptide at 1–55 (MPLHRYPVHLWQKLRLRQGICARLPAHFLRSLEEERTPTPVHYKPHGTKFKINPK) directs the protein to the mitochondrion.

Belongs to the bacterial ribosomal protein bL28 family. Component of the mitochondrial ribosome large subunit (39S) which comprises a 16S rRNA and about 50 distinct proteins. Interacts with OXA1L.

The protein localises to the mitochondrion. This is Large ribosomal subunit protein bL28m (Mrpl28) from Mus musculus (Mouse).